We begin with the raw amino-acid sequence, 310 residues long: Glutaminase 1 (310 aa).

Residues S66, N117, E161, N168, Y192, Y244, and V262 each coordinate substrate. K294 carries the N6-acetyllysine modification.

Belongs to the glutaminase family. In terms of assembly, homotetramer.

It catalyses the reaction L-glutamine + H2O = L-glutamate + NH4(+). This is Glutaminase 1 from Escherichia coli (strain K12).